Here is a 203-residue protein sequence, read N- to C-terminus: NAD(P)H dehydrogenase (quinone) (203 aa).

In terms of domain architecture, Flavodoxin-like spans Val3–Ile194. Residues Ser9 to Ile14 and Thr82 to Phe84 contribute to the FMN site. An NAD(+)-binding site is contributed by Tyr11. Substrate is bound at residue Trp102. Residues Ser117–Gly123 and His138 each bind FMN.

Belongs to the WrbA family. The cofactor is FMN.

It carries out the reaction a quinone + NADH + H(+) = a quinol + NAD(+). The catalysed reaction is a quinone + NADPH + H(+) = a quinol + NADP(+). This chain is NAD(P)H dehydrogenase (quinone), found in Geobacter metallireducens (strain ATCC 53774 / DSM 7210 / GS-15).